We begin with the raw amino-acid sequence, 137 residues long: Probable S-adenosyl-L-methionine-binding protein MTH_1797 (137 aa).

The TsaA-like domain occupies 8–137 (IRPVGVVRSP…YYEDIDSLGF (130 aa)). Residues 25–27 (PAQ), 63–64 (HL), Arg87, Leu97, and 117–120 (LDGS) each bind S-adenosyl-L-methionine.

Belongs to the tRNA methyltransferase O family.

The polypeptide is Probable S-adenosyl-L-methionine-binding protein MTH_1797 (Methanothermobacter thermautotrophicus (strain ATCC 29096 / DSM 1053 / JCM 10044 / NBRC 100330 / Delta H) (Methanobacterium thermoautotrophicum)).